The sequence spans 1245 residues: TAL effector protein Brg11 (1245 aa).

Disordered stretches follow at residues 1–87 (MRIG…LVPE) and 173–205 (CPQAFASPPRAPRSARARRARTGGDAWPAPTFL). The span at 67–87 (PRRPLPVAPASAPPAPSLVPE) shows a compositional bias: pro residues. The Nuclear localization signal 1 signature appears at 185 to 191 (RSARARR). One copy of the Cryptic repeat -1 repeat lies at 286–320 (LTRAHIVDIARQRSGDLALQALLPVATALTAAPLR). Residues 321-354 (LSASQIATVAQYGERPAIQALYRLRRKLTRAPLH) form a Cryptic repeat 0 repeat. Core repeat repeat units lie at residues 355–389 (LTPQQVVAIASNTGGKRALEAVCVQLPVLRAAPYR), 390–424 (LSTEQVVAIASNKGGKQALEAVKAHLLDLLGAPYV), 425–459 (LDTEQVVAIASHNGGKQALEAVKADLLDLRGAPYA), 460–494 (LSTEQVVAIASHNGGKQALEAVKADLLELRGAPYA), 495–529 (LSTEQVVAIASHNGGKQALEAVKAHLLDLRGVPYA), 530–564 (LSTEQVVAIASHNGGKQALEAVKAQLLDLRGAPYA), 565–599 (LSTAQVVAIASNGGGKQALEGIGEQLLKLRTAPYG), 600–634 (LSTEQVVAIASHDGGKQALEAVGAQLVALRAAPYA), 635–669 (LSTEQVVAIASNKGGKQALEAVKAQLLELRGAPYA), 670–704 (LSTAQVVAIASHDGGNQALEAVGTQLVALRAAPYA), 705–739 (LSTEQVVAIASHDGGKQALEAVGAQLVALRAAPYA), 740–774 (LNTEQVVAIASSHGGKQALEAVRALFPDLRAAPYA), 775–809 (LSTAQLVAIASNPGGKQALEAVRALFRELRAAPYA), 810–844 (LSTEQVVAIASNHGGKQALEAVRALFRGLRAAPYG), 845–879 (LSTAQVVAIASSNGGKQALEAVWALLPVLRATPYD), and 880–914 (LNTAQIVAIASHDGGKPALEAVWAKLPVLRGAPYA). The stretch at 915–948 (LSTAQVVAIACISGQQALEAIEAHMPTLRQASHS) is one Cryptic repeat +1 repeat. Residues 949-982 (LSPERVAAIACIGGRSAVEAVRQGLPVKAIRRIR) form a Cryptic repeat +2 repeat. Short sequence motifs (nuclear localization signal) lie at residues 980 to 983 (RIRR), 1108 to 1111 (HRKR), and 1145 to 1148 (RRKR). Residues 1096-1138 (SPGMAGQSACSPHRKRPAETAIAPRSIRRSPNNAGQPSEPWPD) form a disordered region. The interval 1237–1245 (DWLLQILET) is activation domain.

Belongs to the transcription activator-like effector (TALE) family. RipTAL/RTL subfamily.

Its subcellular location is the secreted. It is found in the host nucleus. Exported into plant cells, where it is targeted to the nucleus and probably acts as a transcription factor. Binds DNA in a sequence-specific manner. May contribute to plant pathogenicity. This is TAL effector protein Brg11 from Ralstonia nicotianae (strain ATCC BAA-1114 / GMI1000) (Ralstonia solanacearum).